A 204-amino-acid polypeptide reads, in one-letter code: Large ribosomal subunit protein bL25 (204 aa).

This sequence belongs to the bacterial ribosomal protein bL25 family. CTC subfamily. In terms of assembly, part of the 50S ribosomal subunit; part of the 5S rRNA/L5/L18/L25 subcomplex. Contacts the 5S rRNA. Binds to the 5S rRNA independently of L5 and L18.

Functionally, this is one of the proteins that binds to the 5S RNA in the ribosome where it forms part of the central protuberance. This Pseudoalteromonas translucida (strain TAC 125) protein is Large ribosomal subunit protein bL25.